The following is a 535-amino-acid chain: Bifunctional purine biosynthesis protein PurH (535 aa).

Residues 6-151 (TRLPIRRALI…KNHKDVAIVV (146 aa)) enclose the MGS-like domain.

This sequence belongs to the PurH family.

It catalyses the reaction (6R)-10-formyltetrahydrofolate + 5-amino-1-(5-phospho-beta-D-ribosyl)imidazole-4-carboxamide = 5-formamido-1-(5-phospho-D-ribosyl)imidazole-4-carboxamide + (6S)-5,6,7,8-tetrahydrofolate. The catalysed reaction is IMP + H2O = 5-formamido-1-(5-phospho-D-ribosyl)imidazole-4-carboxamide. Its pathway is purine metabolism; IMP biosynthesis via de novo pathway; 5-formamido-1-(5-phospho-D-ribosyl)imidazole-4-carboxamide from 5-amino-1-(5-phospho-D-ribosyl)imidazole-4-carboxamide (10-formyl THF route): step 1/1. The protein operates within purine metabolism; IMP biosynthesis via de novo pathway; IMP from 5-formamido-1-(5-phospho-D-ribosyl)imidazole-4-carboxamide: step 1/1. The protein is Bifunctional purine biosynthesis protein PurH of Pseudomonas entomophila (strain L48).